Reading from the N-terminus, the 306-residue chain is MNRSLMSLLGREGLGEKITDATPLPDTAETIHISSLALLKMLQHARAGVPLEVMGLMLGELIDEYTIRVIDVFAMPQSGTSVSVEAIDPVFQTKMLDMLKQTGRDEIVIGWYHSHPGFGCWLSSVDVNTQQSFEQLQSRAVAVVVDPLQSVRGKVVIDAFRTIKTSPTAEPRQITSNLGHLQDPSIQALIHGLNRNYYSIAINYRKNELEQKMLLNLHKKKWTEGLIVDKFDTHEQSNEKQINNLLELTKQYQKSIQDEDKIEPEKKEVSAVGKLDPKRHLISDVHTLMANNVVRVLTVMLDTVTF.

In terms of domain architecture, MPN spans 31–166 (IHISSLALLK…IDAFRTIKTS (136 aa)). Positions 113, 115, and 126 each coordinate Zn(2+). Residues 113–126 (HSHPGFGCWLSSVD) carry the JAMM motif motif.

Belongs to the peptidase M67A family. PSMD14 subfamily. As to quaternary structure, component of the 19S regulatory cap of the 26S proteasome.

Its function is as follows. Metalloprotease component of the 26S proteasome that specifically cleaves 'Lys-63'-linked polyubiquitin chains. The 26S proteasome is involved in the ATP-dependent degradation of ubiquitinated proteins. The function of the 'Lys-63'-specific deubiquitination of the proteasome is unclear. This Dictyostelium discoideum (Social amoeba) protein is 26S proteasome non-ATPase regulatory subunit 14 (psmD14).